The sequence spans 428 residues: Pregnancy-specific beta-1-glycoprotein 3 (428 aa).

An N-terminal signal peptide occupies residues 1-34 (MGPLSAPPCTQRITWKGLLLTALLLNFWNLPTTA). An Ig-like V-type domain is found at 35 to 144 (QVTIEAEPTK…TGHFTFTLYL (110 aa)). 2 N-linked (GlcNAc...) asparagine glycosylation sites follow: Asn104 and Asn111. Positions 127–129 (RGD) match the Cell attachment site motif. Ig-like C2-type domains lie at 147–234 (PKPS…VTLN), 240–327 (PKPY…VTLN), and 335–410 (PRIY…KSMT). Intrachain disulfides connect Cys169–Cys217, Cys262–Cys310, and Cys354–Cys394. N-linked (GlcNAc...) asparagine glycans are attached at residues Asn268 and Asn303.

This sequence belongs to the immunoglobulin superfamily. CEA family.

It is found in the secreted. The polypeptide is Pregnancy-specific beta-1-glycoprotein 3 (PSG3) (Homo sapiens (Human)).